We begin with the raw amino-acid sequence, 172 residues long: MATMMSMSSFAGAAVVPRSSASSFGARSLPALGRRALVVRAQTEGPSAPPPNKPKASTSIWDEMAFSGPAPERINGRLAMVGFVTALAVEAGRGDGLLSQLGSGTGQAWFAYTVAVLSMASLVPLLQGESAEGRAGAIMNANAELWNGRFAMLGLVALAATEIITGAPFINV.

The transit peptide at 1–38 directs the protein to the chloroplast; that stretch reads MATMMSMSSFAGAAVVPRSSASSFGARSLPALGRRALV. Helical transmembrane passes span 106-126 and 150-170; these read GQAWFAYTVAVLSMASLVPLL and FAMLGLVALAATEIITGAPFI.

The protein belongs to the ELIP/psbS family.

It is found in the plastid. The protein resides in the chloroplast membrane. Functionally, probably involved in the integration of pigments into the mature pigment-protein complexes. This chain is Low molecular mass early light-inducible protein HV90, chloroplastic, found in Hordeum vulgare (Barley).